The primary structure comprises 308 residues: tRNA dimethylallyltransferase (308 aa).

10-17 (GPTASGKT) contacts ATP. Substrate is bound at residue 12-17 (TASGKT). Interaction with substrate tRNA stretches follow at residues 35 to 38 (DSSL) and 159 to 163 (QRIFR).

It belongs to the IPP transferase family. In terms of assembly, monomer. Requires Mg(2+) as cofactor.

It carries out the reaction adenosine(37) in tRNA + dimethylallyl diphosphate = N(6)-dimethylallyladenosine(37) in tRNA + diphosphate. Functionally, catalyzes the transfer of a dimethylallyl group onto the adenine at position 37 in tRNAs that read codons beginning with uridine, leading to the formation of N6-(dimethylallyl)adenosine (i(6)A). The protein is tRNA dimethylallyltransferase of Francisella philomiragia subsp. philomiragia (strain ATCC 25017 / CCUG 19701 / FSC 153 / O#319-036).